The chain runs to 455 residues: Beta-cyclopiazonate dehydrogenase (455 aa).

The N-terminal stretch at 1–25 (MAVRIARFLGLSTVAYLALANGIDA) is a signal peptide.

Belongs to the beta-cyclopiazonate dehydrogenase family. FAD serves as cofactor.

The enzyme catalyses beta-cyclopiazonate + A = alpha-cyclopiazonate + AH2. Its function is as follows. Beta-cyclopiazonate dehydrogenase involved in the synthesis of the fungal neurotoxin alpha-cyclopiazonic acid (CPA). CpaO carries out the dehydrogenation of beta-CPA to yield an unstable enimine product, which is captured by intramolecular cyclization to create the pentacyclic fused scaffold of alpha-cyclopiazonate. This chain is Beta-cyclopiazonate dehydrogenase, found in Aspergillus oryzae (strain ATCC 42149 / RIB 40) (Yellow koji mold).